We begin with the raw amino-acid sequence, 59 residues long: uncharacterized protein (59 aa).

This is an uncharacterized protein from Bacillus subtilis (strain 168).